A 108-amino-acid chain; its full sequence is Histone H4 (108 aa).

Residues 1–36 form a disordered region; the sequence is MSSAQSRGGKTGGKVGGKVGAKRHKKTQKEHINGIT. The segment covering 9-19 has biased composition (gly residues); it reads GKTGGKVGGKV.

Belongs to the histone H4 family. The nucleosome is a histone octamer containing two molecules each of H2A, H2B, H3 and H4 assembled in one H3-H4 heterotetramer and two H2A-H2B heterodimers. The octamer wraps approximately 147 bp of DNA.

Its subcellular location is the nucleus. The protein resides in the chromosome. Its function is as follows. Core component of nucleosome. Nucleosomes wrap and compact DNA into chromatin, limiting DNA accessibility to the cellular machineries which require DNA as a template. Histones thereby play a central role in transcription regulation, DNA repair, DNA replication and chromosomal stability. DNA accessibility is regulated via a complex set of post-translational modifications of histones, also called histone code, and nucleosome remodeling. The polypeptide is Histone H4 (H4a) (Dictyostelium discoideum (Social amoeba)).